We begin with the raw amino-acid sequence, 90 residues long: Small ribosomal subunit protein bS16 (90 aa).

It belongs to the bacterial ribosomal protein bS16 family.

The sequence is that of Small ribosomal subunit protein bS16 from Bacillus anthracis (strain A0248).